Reading from the N-terminus, the 454-residue chain is tRNA modification GTPase MnmE (454 aa).

(6S)-5-formyl-5,6,7,8-tetrahydrofolate is bound by residues Arg-23, Glu-80, and Lys-120. The TrmE-type G domain occupies 216 to 377 (GMKVVIAGRP…LRDHLKQSMG (162 aa)). Residue Asn-226 participates in K(+) binding. GTP-binding positions include 226–231 (NAGKSS), 245–251 (TDIAGTT), 270–273 (DTAG), 335–338 (NKAD), and 358–360 (SAR). Ser-230 contributes to the Mg(2+) binding site. Residues Thr-245, Ile-247, and Thr-250 each coordinate K(+). Thr-251 is a binding site for Mg(2+). Lys-454 serves as a coordination point for (6S)-5-formyl-5,6,7,8-tetrahydrofolate.

The protein belongs to the TRAFAC class TrmE-Era-EngA-EngB-Septin-like GTPase superfamily. TrmE GTPase family. Homodimer. Heterotetramer of two MnmE and two MnmG subunits. K(+) serves as cofactor.

Its subcellular location is the cytoplasm. In terms of biological role, exhibits a very high intrinsic GTPase hydrolysis rate. Involved in the addition of a carboxymethylaminomethyl (cmnm) group at the wobble position (U34) of certain tRNAs, forming tRNA-cmnm(5)s(2)U34. The chain is tRNA modification GTPase MnmE from Yersinia pseudotuberculosis serotype IB (strain PB1/+).